The following is a 199-amino-acid chain: NADH-quinone oxidoreductase subunit C (199 aa).

Belongs to the complex I 30 kDa subunit family. NDH-1 is composed of 14 different subunits. Subunits NuoB, C, D, E, F, and G constitute the peripheral sector of the complex.

It is found in the cell inner membrane. The enzyme catalyses a quinone + NADH + 5 H(+)(in) = a quinol + NAD(+) + 4 H(+)(out). NDH-1 shuttles electrons from NADH, via FMN and iron-sulfur (Fe-S) centers, to quinones in the respiratory chain. The immediate electron acceptor for the enzyme in this species is believed to be ubiquinone. Couples the redox reaction to proton translocation (for every two electrons transferred, four hydrogen ions are translocated across the cytoplasmic membrane), and thus conserves the redox energy in a proton gradient. The sequence is that of NADH-quinone oxidoreductase subunit C from Rhodopseudomonas palustris (strain BisB18).